Here is a 175-residue protein sequence, read N- to C-terminus: Pituitary adenylate cyclase-activating polypeptide (175 aa).

An N-terminal signal peptide occupies residues 1-24 (MTMCSGARLALLVYGIIMHSSVSC). The propeptide occupies 25-78 (SPAAGLSFPGIRPEDEAYDQDGNPLQDFYDWDPPGVGSPASALRDAYALYYPAD). The important for receptor binding stretch occupies residues 149–157 (VKKYLAAVL). Leucine 157 carries the leucine amide modification. Lysine 168 bears the Lysine amide mark. Residues 172 to 175 (IAYL) constitute a propeptide that is removed on maturation.

It belongs to the glucagon family.

Its subcellular location is the secreted. Its function is as follows. PACAP is a neuropeptide involved in diverse array of physiological processes through activating the PACAP subfamily of class B1 G protein-coupled receptors: VIP receptor 1 (VIPR1), VIP receptor 2 (VIPR2), and PACAP type I receptor (ADCYAP1R1). Exerts neuroprotective and general cytoprotective effects due to anti-apoptotic, anti-inflammatory, and antioxidant actions. Promotes neuron projection development through the RAPGEF2/Rap1/B-Raf/ERK pathway. In chromaffin cells, induces long-lasting increase of intracellular calcium concentrations and neuroendocrine secretion. Involved in the control of glucose homeostasis, induces insulin secretion by pancreatic beta cells. PACAP exists in two bioactive forms from proteolysis of the same precursor protein, PACAP27 and PACAP38, which differ by eleven amino acid residues in the C-terminus. The sequence is that of Pituitary adenylate cyclase-activating polypeptide from Mus musculus (Mouse).